Here is a 201-residue protein sequence, read N- to C-terminus: FMN-dependent NADH:quinone oxidoreductase (201 aa).

FMN-binding positions include S10, 16–18 (SQS), 96–99 (MYNF), and 140–143 (SRGG).

It belongs to the azoreductase type 1 family. In terms of assembly, homodimer. FMN serves as cofactor.

The catalysed reaction is 2 a quinone + NADH + H(+) = 2 a 1,4-benzosemiquinone + NAD(+). It carries out the reaction N,N-dimethyl-1,4-phenylenediamine + anthranilate + 2 NAD(+) = 2-(4-dimethylaminophenyl)diazenylbenzoate + 2 NADH + 2 H(+). In terms of biological role, quinone reductase that provides resistance to thiol-specific stress caused by electrophilic quinones. Also exhibits azoreductase activity. Catalyzes the reductive cleavage of the azo bond in aromatic azo compounds to the corresponding amines. The protein is FMN-dependent NADH:quinone oxidoreductase of Pectobacterium atrosepticum (strain SCRI 1043 / ATCC BAA-672) (Erwinia carotovora subsp. atroseptica).